The chain runs to 219 residues: MASPTLTLLLLLTTVSFFISSSADPDMLQDLCVADLPSGIKINGFPCKDAATVTSADFFSQGLAKPGLTNNTFGALVTGANVMTIPGLNTLGVSLSRIDYAPGGLNPPHTHPRATEVVFVLEGTLDVGFLTTANKLISQSLKKGDVFAFPKGLVHFQKNNGDVPASVIAAFNSQLPGTQSLGATLFGSTPPVPDNILAQAFQTSPGTVKHIKSKFQPKK.

The first 21 residues, 1–21 (MASPTLTLLLLLTTVSFFISS), serve as a signal peptide directing secretion. Residues cysteine 32 and cysteine 47 are joined by a disulfide bond. The 149-residue stretch at 61-209 (QGLAKPGLTN…AFQTSPGTVK (149 aa)) folds into the Cupin type-1 domain. N-linked (GlcNAc...) asparagine glycosylation is present at asparagine 70. Mn(2+) is bound by residues histidine 109, histidine 111, glutamate 116, and histidine 155.

It belongs to the germin family. Oligomer (believed to be a pentamer but probably hexamer).

It is found in the secreted. The protein resides in the extracellular space. The protein localises to the apoplast. Functionally, may play a role in plant defense. Probably has no oxalate oxidase activity even if the active site is conserved. The polypeptide is Germin-like protein subfamily 2 member 1 (GLP4) (Arabidopsis thaliana (Mouse-ear cress)).